The primary structure comprises 119 residues: MIPGRMNSREMRRLMAQMGIKSTEMDDVTKVIFKGKTKDYVIDNAQVTMIEAQGVKTFQVVGTMREVPKEPEEKKEESFPEDDIKLVMEQASVSREKAIEALKASGGEPAQAIMNLMQK.

Residues arginine 5–glutamate 73 form the NAC-A/B domain.

This sequence belongs to the NAC-alpha family. Homodimer. Interacts with the ribosome. Binds ribosomal RNA.

Contacts the emerging nascent chain on the ribosome. This chain is Nascent polypeptide-associated complex protein, found in Thermoplasma acidophilum (strain ATCC 25905 / DSM 1728 / JCM 9062 / NBRC 15155 / AMRC-C165).